A 300-amino-acid chain; its full sequence is Virginiamycin B lyase (300 aa).

His-231 serves as a coordination point for substrate. Residue Glu-270 coordinates Mg(2+). Catalysis depends on His-272, which acts as the Proton acceptor. Residue Glu-287 coordinates Mg(2+).

The protein belongs to the Vgb family. As to quaternary structure, monomer. The cofactor is Mg(2+).

Its function is as follows. Inactivates the type B streptogramin antibiotics by linearizing the lactone ring at the ester linkage, generating a free phenylglycine carboxylate and converting the threonyl moiety into 2-amino-butenoic acid. This is Virginiamycin B lyase from Saccharopolyspora erythraea (strain ATCC 11635 / DSM 40517 / JCM 4748 / NBRC 13426 / NCIMB 8594 / NRRL 2338).